The chain runs to 253 residues: Chemotaxis protein PomA (253 aa).

A run of 4 helical transmembrane segments spans residues 6-26 (LLGL…GGSI), 28-48 (MFVD…VVLM), 146-166 (FGDV…VAML), and 180-200 (AVAL…FFPI). The Cytoplasmic portion of the chain corresponds to 201–253 (ADKLSLRRDQETLNRRLIMDGVLAIQDGQNPRVIDSYLKNYLNEGKRALEIDE).

It belongs to the MotA family. In terms of assembly, each stator complex is composed of 4 PomA and 2 PomB subunits. 2 A subunits and 1 B subunit are thought to form a single ion channel, so that each stator complex contains two channels.

The protein resides in the cell inner membrane. Functionally, pomA and PomB comprise the stator element of the flagellar motor complex. Required for rotation of the flagellar motor. Probable transmembrane proton channel. The polypeptide is Chemotaxis protein PomA (pomA) (Vibrio alginolyticus).